Consider the following 315-residue polypeptide: Probable cell division protein WhiA (315 aa).

The H-T-H motif DNA-binding region spans 280–313 (SLKELGDLLDPPLSKSGVAYRMRKLEESVKEILQ).

This sequence belongs to the WhiA family.

In terms of biological role, involved in cell division and chromosome segregation. The sequence is that of Probable cell division protein WhiA from Syntrophomonas wolfei subsp. wolfei (strain DSM 2245B / Goettingen).